Consider the following 475-residue polypeptide: MAPQTETKTGTGFQAGVKDYRLTYYTPDYQVKETDILAAFRMTPQPGVPAEECGAAVAAESSTGTWTTVWTDGLTQLDRYKGRCYDLEPVPGEDNQFIAYVAYPLDLFEEGSVTNLFTSIVGNVFGFKALRALRLEDLRIPVAYCKTFQGAPHGIQTERDKLNKYGRGLLGCTIKPKLGLSAKNYGRAVYECLRGGLDFTKDDENVNSQPFMRWRDRFLFVAEAIYKSQAETGEIKGHYLNATAGNVDQMLKRAQVAKELGMPIIMHDYLTAGFTANTTLATYCREEGLLLHIHRAMHAVIDRQRNHGIHFRVLAKALRLSGGDHLHSGTVVGKLEGERNVTLGFVDLMRDAYVEKDRDRGIYFSQDWASLPGVMPVASGGIHVWHMPALVEIFGDDACLQFGGGTLGHPWGNAPGASANRVALEACTQARNEGRDLAREGGDVIRAACKWSPELAAACEVWKEIKFEFDTVDTL.

Residues 1–2 constitute a propeptide that is removed on maturation; the sequence is MA. Pro3 bears the N-acetylproline mark. The substrate site is built by Asn123 and Thr173. Lys175 serves as the catalytic Proton acceptor. Substrate is bound at residue Lys177. Residues Lys201, Asp203, and Glu204 each contribute to the Mg(2+) site. Lys201 bears the N6-carboxylysine mark. The active-site Proton acceptor is the His294. The substrate site is built by Arg295, His327, and Ser379.

This sequence belongs to the RuBisCO large chain family. Type I subfamily. As to quaternary structure, heterohexadecamer of 8 large chains and 8 small chains. Mg(2+) is required as a cofactor.

The protein resides in the plastid. It localises to the chloroplast. It catalyses the reaction 2 (2R)-3-phosphoglycerate + 2 H(+) = D-ribulose 1,5-bisphosphate + CO2 + H2O. The enzyme catalyses D-ribulose 1,5-bisphosphate + O2 = 2-phosphoglycolate + (2R)-3-phosphoglycerate + 2 H(+). In terms of biological role, ruBisCO catalyzes two reactions: the carboxylation of D-ribulose 1,5-bisphosphate, the primary event in carbon dioxide fixation, as well as the oxidative fragmentation of the pentose substrate in the photorespiration process. Both reactions occur simultaneously and in competition at the same active site. This chain is Ribulose bisphosphate carboxylase large chain, found in Ostreococcus tauri.